A 369-amino-acid polypeptide reads, in one-letter code: Queuine tRNA-ribosyltransferase (369 aa).

The active-site Proton acceptor is the D89. Residues 89 to 93 (DSGGF), D142, Q184, and G211 contribute to the substrate site. The RNA binding stretch occupies residues 242-248 (GGGSPEL). D261 (nucleophile) is an active-site residue. Positions 266 to 270 (TRIAR) are RNA binding; important for wobble base 34 recognition. The Zn(2+) site is built by C299, C301, C304, and H330.

This sequence belongs to the queuine tRNA-ribosyltransferase family. As to quaternary structure, homodimer. Within each dimer, one monomer is responsible for RNA recognition and catalysis, while the other monomer binds to the replacement base PreQ1. The cofactor is Zn(2+).

It carries out the reaction 7-aminomethyl-7-carbaguanine + guanosine(34) in tRNA = 7-aminomethyl-7-carbaguanosine(34) in tRNA + guanine. Its pathway is tRNA modification; tRNA-queuosine biosynthesis. Functionally, catalyzes the base-exchange of a guanine (G) residue with the queuine precursor 7-aminomethyl-7-deazaguanine (PreQ1) at position 34 (anticodon wobble position) in tRNAs with GU(N) anticodons (tRNA-Asp, -Asn, -His and -Tyr). Catalysis occurs through a double-displacement mechanism. The nucleophile active site attacks the C1' of nucleotide 34 to detach the guanine base from the RNA, forming a covalent enzyme-RNA intermediate. The proton acceptor active site deprotonates the incoming PreQ1, allowing a nucleophilic attack on the C1' of the ribose to form the product. After dissociation, two additional enzymatic reactions on the tRNA convert PreQ1 to queuine (Q), resulting in the hypermodified nucleoside queuosine (7-(((4,5-cis-dihydroxy-2-cyclopenten-1-yl)amino)methyl)-7-deazaguanosine). The chain is Queuine tRNA-ribosyltransferase from Thermotoga neapolitana (strain ATCC 49049 / DSM 4359 / NBRC 107923 / NS-E).